The chain runs to 381 residues: MSNPSPQVPEEEASTSVCRPKSSMASTSRRQRRERRFRRYLSAGRLVRAQALLQRHPGLDVDAGQPPPLHRACARHDAPALCLLLRLGADPAHQDRHGDTALHAAARQGPDAYTDFFLPLLSRCPSAMGIKNKDGETPGQILGWGPPWDSAEEEEEDDASKEREWRQKLQGELEDEWQEVMGRFEGDASHETQEPESFSAWSDRLAREHAQKCQQQQREAEGSCRPPRAEGSSQSWRQQEEEQRLFRERARVKEEELRESRARRAQEALGDREPKPARAGPRAEHPRGAGRGSLWRFGDVPWPCPGGGDPEAMAAALVARGPPLEEQGALRRYLRVQQVRWHPDRFLQRFRSQIETWELGRVMGAVTALSQALNRHAEALK.

The segment at 1–34 is disordered; the sequence is MSNPSPQVPEEEASTSVCRPKSSMASTSRRQRRE. ANK repeat units follow at residues 64–93 and 97–133; these read GQPP…DPAH and HGDT…IKNK. Disordered regions lie at residues 131 to 167, 186 to 242, and 256 to 294; these read KNKD…EWRQ, GDAS…QEEE, and ELRE…RGSL. The residue at position 150 (S150) is a Phosphoserine. Acidic residues predominate over residues 150 to 159; sequence SAEEEEEDDA. The segment covering 256-287 has biased composition (basic and acidic residues); it reads ELRESRARRAQEALGDREPKPARAGPRAEHPR.

As to quaternary structure, interacts with CACTIN (via N-terminal domain); the interaction occurs in a pro-inflammatory-independent manner.

It is found in the nucleus. In terms of biological role, involved in the regulation of innate immune response. Acts as negative regulator of Toll-like receptor and interferon-regulatory factor (IRF) signaling pathways. Contributes to the negative regulation of transcriptional activation of NF-kappa-B target genes in response to endogenous pro-inflammatory stimuli. The chain is NF-kappa-B inhibitor-like protein 1 (NFKBIL1) from Macaca mulatta (Rhesus macaque).